Here is a 480-residue protein sequence, read N- to C-terminus: Radical SAM Nalpha-GlyT isomerase (480 aa).

Iron-sulfur cluster contacts are provided by cysteine 125, cysteine 129, and cysteine 132. The segment at 457 to 480 (KIVEPTPPEEDGGERKIIPITQID) is disordered.

It carries out the reaction 5-N(alpha)-glycyl-dTMP in DNA + AH2 + S-adenosyl-L-methionine = 5-C(alpha)-glycyl-dTMP in DNA + 5'-deoxyadenosine + L-methionine + A + H(+). In terms of biological role, isomerizes 5-N-alpha-glycinylthymidine (Nalpha-GlyT) into 5-Calpha-glycinylthymidine (Calpha-GlyT) as a step in the pathway leading to thymidine hypermodifications in the viral genome. As a final result of the pathway of hypermodification, 5-aminoethyl-2'-deoxyuridine (5-NedU) substitutes for about 30% of thymidines in the viral DNA. These modifications probably prevent degradation of viral genome by the host restriction-modification antiviral defense system. The protein is Radical SAM Nalpha-GlyT isomerase of Pseudomonas phage M6.